A 270-amino-acid polypeptide reads, in one-letter code: Exosome complex component rrp43 (270 aa).

This sequence belongs to the RNase PH family. Component of the RNA exosome complex. Specifically part of the catalytically inactive RNA exosome core complex (Exo-9) which may associate with the catalytic subunits rrp66 and dis3 in cytoplasmic- and nuclear-specific RNA exosome complex forms. Exo-9 is formed by a hexameric base ring of RNase PH domain-containing subunits and a cap ring consisting of csl4, rrp4 and rrp40.

The protein localises to the cytoplasm. It is found in the nucleus. The protein resides in the nucleolus. Functionally, non-catalytic component of the RNA exosome complex which has 3'-&gt;5' exoribonuclease activity and participates in a multitude of cellular RNA processing and degradation events. In the nucleus, the RNA exosome complex is involved in proper maturation of stable RNA species such as rRNA, snRNA and snoRNA, in the elimination of RNA processing by-products and non-coding 'pervasive' transcripts, such as antisense RNA species and cryptic unstable transcripts (CUTs), and of mRNAs with processing defects, thereby limiting or excluding their export to the cytoplasm. In the cytoplasm, the RNA exosome complex is involved in general mRNA turnover and in RNA surveillance pathways, preventing translation of aberrant mRNAs. The catalytic inactive RNA exosome core complex of 9 subunits (Exo-9) is proposed to play a pivotal role in the binding and presentation of RNA for ribonucleolysis, and to serve as a scaffold for the association with catalytic subunits and accessory proteins or complexes. ski6 is part of the hexameric ring of RNase PH domain-containing subunits proposed to form a central channel which threads RNA substrates for degradation. The polypeptide is Exosome complex component rrp43 (rrp43) (Schizosaccharomyces pombe (strain 972 / ATCC 24843) (Fission yeast)).